A 121-amino-acid chain; its full sequence is Large ribosomal subunit protein bL12 (121 aa).

This sequence belongs to the bacterial ribosomal protein bL12 family. As to quaternary structure, homodimer. Part of the ribosomal stalk of the 50S ribosomal subunit. Forms a multimeric L10(L12)X complex, where L10 forms an elongated spine to which 2 to 4 L12 dimers bind in a sequential fashion. Binds GTP-bound translation factors.

Functionally, forms part of the ribosomal stalk which helps the ribosome interact with GTP-bound translation factors. Is thus essential for accurate translation. This chain is Large ribosomal subunit protein bL12, found in Erwinia tasmaniensis (strain DSM 17950 / CFBP 7177 / CIP 109463 / NCPPB 4357 / Et1/99).